A 588-amino-acid polypeptide reads, in one-letter code: Phenol 2-monooxygenase fsqG (588 aa).

Residues D9–W38, P17–A18, D37–K39, T45–G50, Y232, A289–D299, D299, and G309–N313 each bind FAD. Residues D49 and Y232 each contribute to the substrate site.

This sequence belongs to the PheA/TfdB FAD monooxygenase family. Homodimer. FAD serves as cofactor.

Its pathway is secondary metabolite biosynthesis. Functionally, phenol 2-monooxygenase; part of the gene cluster that mediates the biosynthesis of the isoquinoline alkaloids fumisoquin A, fumisoquin B and fumisoquin C; as well as small amounts of fumipyrrole as a shunt metabolite. The products of the cluster lead to a brown coloration and are important for growth and conidiation. The nonribosomal peptide synthetase-like protein fsqF, which lacks a canonical condensation domain, is required for addition of a serine-derived dehydroalanine moiety to activated tyrosine but is not essential for the subsequent steps leading to isoquinoline formation. A different enzyme, most likely the ATP-grasp enzyme fsqD, is responsible for activation of tyrosine. Three additional enzymes encoded by the fsq cluster, the N-methyltransferase fsqC, the phenol 2-monooxygenase fsqG and the FAD-dependent oxidase fsqB, catalyze the formation of the isoquinoline ring system in the fumisoquins. FsqB converts the fspF thiolation domain-bound (2S,4S,5S)-2-amino-6-(3,4-dihydroxyphenyl)-4-hydroxy-5-(methylamino)hexanoyl into isoquinoline. The cyclization most likely proceeds via a two-step mechanism, beginning with FAD-dependent oxidation of the methyl group to an iminium species followed by electrophilic attack on the deprotonated phenol. The chain is Phenol 2-monooxygenase fsqG from Aspergillus fumigatus (strain ATCC MYA-4609 / CBS 101355 / FGSC A1100 / Af293) (Neosartorya fumigata).